The sequence spans 125 residues: Small ribosomal subunit protein uS13 (125 aa).

This sequence belongs to the universal ribosomal protein uS13 family. Part of the 30S ribosomal subunit. Forms a loose heterodimer with protein S19. Forms two bridges to the 50S subunit in the 70S ribosome.

In terms of biological role, located at the top of the head of the 30S subunit, it contacts several helices of the 16S rRNA. In the 70S ribosome it contacts the 23S rRNA (bridge B1a) and protein L5 of the 50S subunit (bridge B1b), connecting the 2 subunits; these bridges are implicated in subunit movement. Contacts the tRNAs in the A and P-sites. This is Small ribosomal subunit protein uS13 from Orientia tsutsugamushi (strain Boryong) (Rickettsia tsutsugamushi).